A 196-amino-acid chain; its full sequence is MQLLEQALARFAEVYGRAAEAADVVDHTACTLATCSASGWPQVRTVLLKGYDERGFAFYTNRHSRKGQALAENPRAAVCFHWAPLAEQVVIEGVVTPVAEAEADAYWAGRPRESQIGGWASHQSRGLESREVLEQRVAEYAARFPDGEAVPRPPHWSGYRLAPVRIEFWRARPGRLHERDVYEHTAEGWCHRLLNP.

FMN-binding positions include 44-49 (RTVLLK), 59-60 (YT), arginine 65, lysine 66, and glutamine 88. Lysine 49 contributes to the substrate binding site. Positions 106, 110, and 114 each coordinate substrate. Residues 123-124 (QS) and tryptophan 169 contribute to the FMN site. Residue 175-177 (RLH) coordinates substrate. Position 179 (arginine 179) interacts with FMN.

The protein belongs to the pyridoxamine 5'-phosphate oxidase family. As to quaternary structure, homodimer. FMN is required as a cofactor.

It catalyses the reaction pyridoxamine 5'-phosphate + O2 + H2O = pyridoxal 5'-phosphate + H2O2 + NH4(+). It carries out the reaction pyridoxine 5'-phosphate + O2 = pyridoxal 5'-phosphate + H2O2. It functions in the pathway cofactor metabolism; pyridoxal 5'-phosphate salvage; pyridoxal 5'-phosphate from pyridoxamine 5'-phosphate: step 1/1. It participates in cofactor metabolism; pyridoxal 5'-phosphate salvage; pyridoxal 5'-phosphate from pyridoxine 5'-phosphate: step 1/1. In terms of biological role, catalyzes the oxidation of either pyridoxine 5'-phosphate (PNP) or pyridoxamine 5'-phosphate (PMP) into pyridoxal 5'-phosphate (PLP). This is Pyridoxine/pyridoxamine 5'-phosphate oxidase from Alkalilimnicola ehrlichii (strain ATCC BAA-1101 / DSM 17681 / MLHE-1).